The following is a 234-amino-acid chain: Glucosamine-6-phosphate deaminase (234 aa).

Asp-62 (proton acceptor; for enolization step) is an active-site residue. Residue Asn-128 is the For ring-opening step of the active site. His-130 functions as the Proton acceptor; for ring-opening step in the catalytic mechanism. Glu-135 functions as the For ring-opening step in the catalytic mechanism.

The protein belongs to the glucosamine/galactosamine-6-phosphate isomerase family. NagB subfamily.

The catalysed reaction is alpha-D-glucosamine 6-phosphate + H2O = beta-D-fructose 6-phosphate + NH4(+). Its pathway is amino-sugar metabolism; N-acetylneuraminate degradation; D-fructose 6-phosphate from N-acetylneuraminate: step 5/5. In terms of biological role, catalyzes the reversible isomerization-deamination of glucosamine 6-phosphate (GlcN6P) to form fructose 6-phosphate (Fru6P) and ammonium ion. The protein is Glucosamine-6-phosphate deaminase of Lactobacillus delbrueckii subsp. bulgaricus (strain ATCC 11842 / DSM 20081 / BCRC 10696 / JCM 1002 / NBRC 13953 / NCIMB 11778 / NCTC 12712 / WDCM 00102 / Lb 14).